A 101-amino-acid chain; its full sequence is MTKQSIRAREFKRIILAKKFFAKRIKLKQIISNIHSSSEERWNAIIKLQQLPRDSSRSRQRNRCSQTGRPHAFLRKFGLSRIKVREAAMRGEIPGLRKASW.

Belongs to the universal ribosomal protein uS14 family. As to quaternary structure, part of the 30S ribosomal subunit. Contacts proteins S3 and S10.

Binds 16S rRNA, required for the assembly of 30S particles and may also be responsible for determining the conformation of the 16S rRNA at the A site. This is Small ribosomal subunit protein uS14 from Baumannia cicadellinicola subsp. Homalodisca coagulata.